The sequence spans 682 residues: DNA ligase (682 aa).

NAD(+) is bound by residues 42-46 (DAAYD), 88-89 (SL), and Glu-121. The active-site N6-AMP-lysine intermediate is the Lys-123. NAD(+)-binding residues include Arg-144, Glu-180, Lys-291, and Lys-315. Positions 409, 412, 427, and 433 each coordinate Zn(2+). The 82-residue stretch at 601–682 (AAGGALAGKT…FRSLAGLPPG (82 aa)) folds into the BRCT domain.

The protein belongs to the NAD-dependent DNA ligase family. LigA subfamily. It depends on Mg(2+) as a cofactor. Mn(2+) serves as cofactor.

The enzyme catalyses NAD(+) + (deoxyribonucleotide)n-3'-hydroxyl + 5'-phospho-(deoxyribonucleotide)m = (deoxyribonucleotide)n+m + AMP + beta-nicotinamide D-nucleotide.. In terms of biological role, DNA ligase that catalyzes the formation of phosphodiester linkages between 5'-phosphoryl and 3'-hydroxyl groups in double-stranded DNA using NAD as a coenzyme and as the energy source for the reaction. It is essential for DNA replication and repair of damaged DNA. The chain is DNA ligase from Acidiphilium cryptum (strain JF-5).